A 602-amino-acid polypeptide reads, in one-letter code: Lysine--tRNA ligase, chloroplastic/mitochondrial (602 aa).

Over residues 50–62 (SSSSSSATTAETS) the composition is skewed to low complexity. The tract at residues 50–83 (SSSSSSATTAETSKPSGRNRRSASSSNSTSDREA) is disordered. The segment at residues 136 to 214 (VSIAGRVVAR…SICVNSFSIL (79 aa)) is a DNA-binding region (OB). Residues Gly-285 and Glu-309 each coordinate substrate. ATP-binding positions include 331-333 (RNE) and 339-340 (HN). Positions 347 and 349 each coordinate substrate. Glu-492 and Glu-499 together coordinate Ca(2+). 499-500 (EM) is a binding site for ATP. Positions 502 and 506 each coordinate substrate. The segment covering 524–543 (HNAKRAEAVRESPEPNAKKD) has biased composition (basic and acidic residues). Positions 524 to 550 (HNAKRAEAVRESPEPNAKKDDDDDESY) are disordered. 575 to 578 (GIDR) lines the ATP pocket.

The protein belongs to the class-II aminoacyl-tRNA synthetase family. Ca(2+) is required as a cofactor.

Its subcellular location is the plastid. The protein localises to the chloroplast. It is found in the mitochondrion. The enzyme catalyses tRNA(Lys) + L-lysine + ATP = L-lysyl-tRNA(Lys) + AMP + diphosphate. In terms of biological role, catalyzes the specific attachment of an amino acid to its cognate tRNA in a 2 step reaction: the amino acid (AA) is first activated by ATP to form AA-AMP and then transferred to the acceptor end of the tRNA. The sequence is that of Lysine--tRNA ligase, chloroplastic/mitochondrial from Arabidopsis thaliana (Mouse-ear cress).